The chain runs to 342 residues: S-adenosylmethionine:tRNA ribosyltransferase-isomerase (342 aa).

It belongs to the QueA family. Monomer.

The protein resides in the cytoplasm. It carries out the reaction 7-aminomethyl-7-carbaguanosine(34) in tRNA + S-adenosyl-L-methionine = epoxyqueuosine(34) in tRNA + adenine + L-methionine + 2 H(+). It participates in tRNA modification; tRNA-queuosine biosynthesis. In terms of biological role, transfers and isomerizes the ribose moiety from AdoMet to the 7-aminomethyl group of 7-deazaguanine (preQ1-tRNA) to give epoxyqueuosine (oQ-tRNA). The sequence is that of S-adenosylmethionine:tRNA ribosyltransferase-isomerase from Moorella thermoacetica (strain ATCC 39073 / JCM 9320).